A 92-amino-acid chain; its full sequence is Long neurotoxin 2 (92 aa).

The N-terminal stretch at 1-21 is a signal peptide; the sequence is MKTLLLTLVVVTIVCLDLGYT. Disulfide bonds link Cys-24/Cys-42, Cys-35/Cys-63, Cys-48/Cys-52, Cys-67/Cys-79, and Cys-80/Cys-85.

This sequence belongs to the three-finger toxin family. Long-chain subfamily. Type II alpha-neurotoxin sub-subfamily. As to expression, expressed by the venom gland.

The protein resides in the secreted. Its function is as follows. Binds with high affinity to muscular (alpha-1/CHRNA1) and neuronal (alpha-7/CHRNA7) nicotinic acetylcholine receptor (nAChR) and inhibits acetylcholine from binding to the receptor, thereby impairing neuromuscular and neuronal transmission. The protein is Long neurotoxin 2 of Oxyuranus microlepidotus (Inland taipan).